The chain runs to 427 residues: GTPase Obg (427 aa).

Positions 1 to 158 (MFIDKAKIHL…LTVTLELKLI (158 aa)) constitute an Obg domain. The OBG-type G domain occupies 159–330 (ADVGLVGFPN…LLDYVSIKLK (172 aa)). Residues 165-172 (GFPNVGKS), 190-194 (FTTLT), 212-215 (DIPG), 282-285 (NKTD), and 311-313 (SAA) contribute to the GTP site. Residues S172 and T192 each coordinate Mg(2+). An OCT domain is found at 347 to 427 (LYELKEKDTN…IYDVEFEYFH (81 aa)).

The protein belongs to the TRAFAC class OBG-HflX-like GTPase superfamily. OBG GTPase family. As to quaternary structure, monomer. Mg(2+) is required as a cofactor.

It localises to the cytoplasm. Its function is as follows. An essential GTPase which binds GTP, GDP and possibly (p)ppGpp with moderate affinity, with high nucleotide exchange rates and a fairly low GTP hydrolysis rate. Plays a role in control of the cell cycle, stress response, ribosome biogenesis and in those bacteria that undergo differentiation, in morphogenesis control. In Alkaliphilus metalliredigens (strain QYMF), this protein is GTPase Obg.